The primary structure comprises 199 residues: Chromophore lyase CpcT/CpeT (199 aa).

The protein belongs to the CpcT/CpeT biliprotein lyase family.

Functionally, covalently attaches a chromophore to Cys residue(s) of phycobiliproteins. The protein is Chromophore lyase CpcT/CpeT of Prochlorococcus marinus (strain NATL1A).